The chain runs to 909 residues: Coatomer subunit beta'-3 (909 aa).

WD repeat units lie at residues 13 to 52 (QRSERVKSVDLHPTEPWILASLYSGTVCIWNYQTQTITKS), 55 to 94 (VTELPVRSAKFIPRKQWVVAGADDMYIRVYNYNTMDKVKV), 97 to 136 (AHSDYIRCVAVHPTLPYVLSSSDDMLIKLWDWENGWACTQ), 140 to 180 (GHSH…PNFT), 183 to 224 (AHQK…CVQT), 227 to 266 (GHTHNVSAVCFHPELPIIITGSEDGTVRIWHATTYRLENT), 269 to 309 (YGLE…ASMD), 351 to 390 (TCDLYPQSLKHNPNGRFVVVCGDGEYIIYTALAWRNRSFG), and 461 to 501 (QIDV…SHFD). The segment at 862–909 (EENGHVENEGDEEEQQEEEVNEEEGVVDADSTDGAVLVNGSEVLTPHP) is disordered. Over residues 870-892 (EGDEEEQQEEEVNEEEGVVDADS) the composition is skewed to acidic residues.

This sequence belongs to the WD repeat COPB2 family. As to quaternary structure, oligomeric complex that consists of at least the alpha, beta, beta', gamma, delta, epsilon and zeta subunits.

It localises to the cytoplasm. Its subcellular location is the golgi apparatus membrane. The protein resides in the cytoplasmic vesicle. It is found in the COPI-coated vesicle membrane. Its function is as follows. The coatomer is a cytosolic protein complex that binds to dilysine motifs and reversibly associates with Golgi non-clathrin-coated vesicles, which further mediate biosynthetic protein transport from the ER, via the Golgi up to the trans Golgi network. Coatomer complex is required for budding from Golgi membranes, and is essential for the retrograde Golgi-to-ER transport of dilysine-tagged proteins. The chain is Coatomer subunit beta'-3 from Arabidopsis thaliana (Mouse-ear cress).